The sequence spans 458 residues: Serine--tRNA ligase (458 aa).

255-257 is an L-serine binding site; that stretch reads TSE. ATP contacts are provided by residues 286–288 and Val302; that span reads RKE. Glu309 lines the L-serine pocket. An ATP-binding site is contributed by 373-376; the sequence is ELVS. Thr409 is a binding site for L-serine.

The protein belongs to the class-II aminoacyl-tRNA synthetase family. Type-1 seryl-tRNA synthetase subfamily. As to quaternary structure, homodimer. The tRNA molecule binds across the dimer.

The protein localises to the cytoplasm. The enzyme catalyses tRNA(Ser) + L-serine + ATP = L-seryl-tRNA(Ser) + AMP + diphosphate + H(+). It carries out the reaction tRNA(Sec) + L-serine + ATP = L-seryl-tRNA(Sec) + AMP + diphosphate + H(+). The protein operates within aminoacyl-tRNA biosynthesis; selenocysteinyl-tRNA(Sec) biosynthesis; L-seryl-tRNA(Sec) from L-serine and tRNA(Sec): step 1/1. Its function is as follows. Catalyzes the attachment of serine to tRNA(Ser). Is also able to aminoacylate tRNA(Sec) with serine, to form the misacylated tRNA L-seryl-tRNA(Sec), which will be further converted into selenocysteinyl-tRNA(Sec). The sequence is that of Serine--tRNA ligase from Ignicoccus hospitalis (strain KIN4/I / DSM 18386 / JCM 14125).